The primary structure comprises 242 residues: Uridylate kinase (242 aa).

11–14 (KLSG) contributes to the ATP binding site. The interval 19 to 24 (GNMGYG) is involved in allosteric activation by GTP. Residue Gly53 coordinates UMP. The ATP site is built by Gly54 and Arg58. UMP contacts are provided by residues Asp73 and 134–141 (SGNPFFTT). ATP-binding residues include Thr161, Tyr167, and Asp170.

It belongs to the UMP kinase family. As to quaternary structure, homohexamer.

The protein localises to the cytoplasm. It carries out the reaction UMP + ATP = UDP + ADP. Its pathway is pyrimidine metabolism; CTP biosynthesis via de novo pathway; UDP from UMP (UMPK route): step 1/1. Its activity is regulated as follows. Allosterically activated by GTP. Inhibited by UTP. Functionally, catalyzes the reversible phosphorylation of UMP to UDP. This is Uridylate kinase from Nostoc sp. (strain PCC 7120 / SAG 25.82 / UTEX 2576).